The chain runs to 175 residues: Translation initiation factor IF-3 (175 aa).

Belongs to the IF-3 family. As to quaternary structure, monomer.

It localises to the cytoplasm. Functionally, IF-3 binds to the 30S ribosomal subunit and shifts the equilibrium between 70S ribosomes and their 50S and 30S subunits in favor of the free subunits, thus enhancing the availability of 30S subunits on which protein synthesis initiation begins. In Staphylococcus aureus (strain NCTC 8325 / PS 47), this protein is Translation initiation factor IF-3.